Consider the following 503-residue polypeptide: AMP phosphorylase (503 aa).

AMP-binding positions include glycine 168, 194 to 199, and threonine 203; that span reads SRAITS. Aspartate 256 (proton donor) is an active-site residue. AMP is bound by residues serine 264 and lysine 288.

Belongs to the thymidine/pyrimidine-nucleoside phosphorylase family. Type 2 subfamily.

The catalysed reaction is AMP + phosphate = alpha-D-ribose 1,5-bisphosphate + adenine. It carries out the reaction CMP + phosphate = cytosine + alpha-D-ribose 1,5-bisphosphate. It catalyses the reaction UMP + phosphate = alpha-D-ribose 1,5-bisphosphate + uracil. Its function is as follows. Catalyzes the conversion of AMP and phosphate to adenine and ribose 1,5-bisphosphate (R15P). Exhibits phosphorylase activity toward CMP and UMP in addition to AMP. Functions in an archaeal AMP degradation pathway, together with R15P isomerase and RubisCO. This chain is AMP phosphorylase, found in Thermococcus sibiricus (strain DSM 12597 / MM 739).